Consider the following 375-residue polypeptide: Prophage integrase IntE (375 aa).

A Core-binding (CB) domain is found at 82–167 (ITTSTWLDRY…VLIDVFKEAQ (86 aa)). Positions 189–375 (ITRQRLSLEE…RGKGWSKVAL (187 aa)) constitute a Tyr recombinase domain. Active-site residues include arginine 226, lysine 249, histidine 330, arginine 333, and histidine 353. Residues 350–375 (LLGHKTQQQTDRYHDDRGKGWSKVAL) are disordered. The O-(3'-phospho-DNA)-tyrosine intermediate role is filled by tyrosine 362.

This sequence belongs to the 'phage' integrase family.

Integrase from the cryptic lambdoid prophage e14. Integrase is necessary for integration of the phage into the host genome by site-specific recombination. In conjunction with excisionase, integrase is also necessary for excision of the prophage from the host genome. This chain is Prophage integrase IntE (intE), found in Escherichia coli (strain K12).